Here is a 210-residue protein sequence, read N- to C-terminus: Proteasome subunit beta 2 (210 aa).

Positions methionine 1–glycine 12 are cleaved as a propeptide — removed in mature form; by autocatalysis. The active-site Nucleophile is the threonine 13.

It belongs to the peptidase T1B family. As to quaternary structure, the 20S proteasome core is composed of 14 alpha and 14 beta subunits that assemble into four stacked heptameric rings, resulting in a barrel-shaped structure. The two inner rings, each composed of seven catalytic beta subunits, are sandwiched by two outer rings, each composed of seven alpha subunits. The catalytic chamber with the active sites is on the inside of the barrel. Has a gated structure, the ends of the cylinder being occluded by the N-termini of the alpha-subunits. Is capped at one or both ends by the proteasome regulatory ATPase, PAN.

It is found in the cytoplasm. The enzyme catalyses Cleavage of peptide bonds with very broad specificity.. The formation of the proteasomal ATPase PAN-20S proteasome complex, via the docking of the C-termini of PAN into the intersubunit pockets in the alpha-rings, triggers opening of the gate for substrate entry. Interconversion between the open-gate and close-gate conformations leads to a dynamic regulation of the 20S proteasome proteolysis activity. Component of the proteasome core, a large protease complex with broad specificity involved in protein degradation. This is Proteasome subunit beta 2 from Nitrosopumilus maritimus (strain SCM1).